Here is a 1004-residue protein sequence, read N- to C-terminus: Hyaluronate lyase HylB (1004 aa).

Residues 1-29 (MKNRKIWVMLVGLFTALTNGFMGTTLTFA) form the signal peptide. Residues His-468, Tyr-477, and Arg-531 contribute to the active site.

The protein belongs to the polysaccharide lyase 8 family.

It localises to the secreted. The enzyme catalyses [hyaluronan](n) = n 3-(4-deoxy-beta-D-gluc-4-enuronosyl)-N-acetyl-D-glucosamine + H2O. The catalysed reaction is Eliminative degradation of polysaccharides containing 1,4-beta-D-hexosaminyl and 1,3-beta-D-glucuronosyl linkages to disaccharides containing 4-deoxy-beta-D-gluc-4-enuronosyl groups.. Its function is as follows. Degrades hyaluronic acid (HA) and chondroitin sulfate (CS) A in vitro. Is not active against heparin sodium salt (HS). Involved in the pathogenesis of vancomycin-resistant E.faecalis infections. Contributes to attenuation of the lipopolysaccharide (LPS)-mediated nuclear factor (NF)-kappa-B activation assayed in the mouse RAW-Blue reporter macrophages. The polypeptide is Hyaluronate lyase HylB (Enterococcus faecalis (strain ATCC 700802 / V583)).